We begin with the raw amino-acid sequence, 381 residues long: MQVTLQAQDGGARALSLKLAHSEVQTPVFMPVGTQGCVKALDSRDMSEILNAQIILVNTYHMYLRIGIERLKNFGGIARFAHFDRSYLSDSGGFQAFSLNKNAKVTNEGVAFKSHIDGSKHFFSPEYVLDIQYALNSDIMMVLDDLVGLPSSEERIADSIARTSDWAQKSLIYHQSQKARGLGLNNNLFAIIQGGVNEHFRTLCAKQLVDMGDFDGFAIGGLAVGETSEQMYKTISFTTPLMPVNKPRYLMGVGTPENIIESIALGVDMFDCVMPTRNARNATLFTHFGKINIKAAIFSNDQSPIDELCDCYTCQHFTRAYLCHLFRSQEMTYYRLASLHNLHYYLNLMREAREAILQGTFSAYRSSFYALREMEIPNNEY.

Residue aspartate 90 is the Proton acceptor of the active site. Substrate is bound by residues 90–94 (DSGGF), aspartate 144, glutamine 193, and glycine 221. The segment at 252 to 258 (GVGTPEN) is RNA binding. The active-site Nucleophile is aspartate 271. Residues 276-280 (TRNAR) form an RNA binding; important for wobble base 34 recognition region. Zn(2+) contacts are provided by cysteine 309, cysteine 311, cysteine 314, and histidine 340.

This sequence belongs to the queuine tRNA-ribosyltransferase family. In terms of assembly, homodimer. Within each dimer, one monomer is responsible for RNA recognition and catalysis, while the other monomer binds to the replacement base PreQ1. Zn(2+) is required as a cofactor.

It carries out the reaction 7-aminomethyl-7-carbaguanine + guanosine(34) in tRNA = 7-aminomethyl-7-carbaguanosine(34) in tRNA + guanine. Its pathway is tRNA modification; tRNA-queuosine biosynthesis. Its function is as follows. Catalyzes the base-exchange of a guanine (G) residue with the queuine precursor 7-aminomethyl-7-deazaguanine (PreQ1) at position 34 (anticodon wobble position) in tRNAs with GU(N) anticodons (tRNA-Asp, -Asn, -His and -Tyr). Catalysis occurs through a double-displacement mechanism. The nucleophile active site attacks the C1' of nucleotide 34 to detach the guanine base from the RNA, forming a covalent enzyme-RNA intermediate. The proton acceptor active site deprotonates the incoming PreQ1, allowing a nucleophilic attack on the C1' of the ribose to form the product. After dissociation, two additional enzymatic reactions on the tRNA convert PreQ1 to queuine (Q), resulting in the hypermodified nucleoside queuosine (7-(((4,5-cis-dihydroxy-2-cyclopenten-1-yl)amino)methyl)-7-deazaguanosine). In Helicobacter hepaticus (strain ATCC 51449 / 3B1), this protein is Queuine tRNA-ribosyltransferase.